Consider the following 126-residue polypeptide: Aspartate 1-decarboxylase (126 aa).

Residue Ser25 is the Schiff-base intermediate with substrate; via pyruvic acid of the active site. Pyruvic acid (Ser) is present on Ser25. Residue Thr57 coordinates substrate. Tyr58 functions as the Proton donor in the catalytic mechanism. A substrate-binding site is contributed by 73-75; sequence GGA.

This sequence belongs to the PanD family. Heterooctamer of four alpha and four beta subunits. It depends on pyruvate as a cofactor. In terms of processing, is synthesized initially as an inactive proenzyme, which is activated by self-cleavage at a specific serine bond to produce a beta-subunit with a hydroxyl group at its C-terminus and an alpha-subunit with a pyruvoyl group at its N-terminus.

It localises to the cytoplasm. The enzyme catalyses L-aspartate + H(+) = beta-alanine + CO2. Its pathway is cofactor biosynthesis; (R)-pantothenate biosynthesis; beta-alanine from L-aspartate: step 1/1. Its function is as follows. Catalyzes the pyruvoyl-dependent decarboxylation of aspartate to produce beta-alanine. This is Aspartate 1-decarboxylase from Acinetobacter baumannii (strain ACICU).